The sequence spans 397 residues: MAKAKFERTKPHVNIGTIGHIDHGKTTLTAAITKVLHDAYPDINEASAFDQIDKAPEERQRGITISIAHVEYQTEARHYAHVDCPGHADYIKNMITGAAQMDGAILVVAATDGPMPQTKEHVLLARQVGVPYIVVALNKADMVDDEEILELVELEVRELLSEYEFPGDDVPVVKVSALKALEGDKEWGNSVLELMKAVDEAIPEPERDVDKPFLMPIEDVFTITGRGTVVTGRIERGVLKVNETVDIIGIKTEKTTTTVTGIEMFRKLLDEGQAGENVGLLLRGIKREDVERGQVIIKPGSVTPHTEFEAQAYILSKDEGGRHTPFFNNYRPQFYFRTTDVTGVVTLPEGTEMVMPGDNTEMKVELIQPVAMEEGLKFAIREGGRTVGAGQVTKINK.

Residues 10–206 (KPHVNIGTIG…AVDEAIPEPE (197 aa)) enclose the tr-type G domain. A G1 region spans residues 19-26 (GHIDHGKT). 19 to 26 (GHIDHGKT) is a GTP binding site. Residue threonine 26 coordinates Mg(2+). The tract at residues 62 to 66 (GITIS) is G2. A G3 region spans residues 83–86 (DCPG). GTP-binding positions include 83–87 (DCPGH) and 138–141 (NKAD). The tract at residues 138–141 (NKAD) is G4. The G5 stretch occupies residues 176 to 178 (SAL).

It belongs to the TRAFAC class translation factor GTPase superfamily. Classic translation factor GTPase family. EF-Tu/EF-1A subfamily. In terms of assembly, monomer.

The protein localises to the cytoplasm. The enzyme catalyses GTP + H2O = GDP + phosphate + H(+). GTP hydrolase that promotes the GTP-dependent binding of aminoacyl-tRNA to the A-site of ribosomes during protein biosynthesis. This chain is Elongation factor Tu-1, found in Streptomyces coelicolor (strain ATCC BAA-471 / A3(2) / M145).